The following is a 418-amino-acid chain: Tyrosine--tRNA ligase (418 aa).

L-tyrosine is bound at residue Tyr39. The 'HIGH' region signature appears at Cys44 to Ser53. L-tyrosine contacts are provided by Tyr176 and Gln180. Positions Lys236–Thr240 match the 'KMSKS' region motif. Residue Lys239 participates in ATP binding. An S4 RNA-binding domain is found at Leu350–Leu416.

The protein belongs to the class-I aminoacyl-tRNA synthetase family. TyrS type 1 subfamily. Homodimer.

Its subcellular location is the cytoplasm. It catalyses the reaction tRNA(Tyr) + L-tyrosine + ATP = L-tyrosyl-tRNA(Tyr) + AMP + diphosphate + H(+). Catalyzes the attachment of tyrosine to tRNA(Tyr) in a two-step reaction: tyrosine is first activated by ATP to form Tyr-AMP and then transferred to the acceptor end of tRNA(Tyr). The protein is Tyrosine--tRNA ligase of Rhodospirillum rubrum (strain ATCC 11170 / ATH 1.1.1 / DSM 467 / LMG 4362 / NCIMB 8255 / S1).